Here is a 396-residue protein sequence, read N- to C-terminus: Elongation factor Tu (396 aa).

Residues 10–205 (KPHVNIGTIG…ACDDSIPDPE (196 aa)) enclose the tr-type G domain. Positions 19 to 26 (GHVDHGKT) are G1. 19–26 (GHVDHGKT) contacts GTP. Thr26 is a Mg(2+) binding site. Residues 62–66 (GITIN) are G2. A G3 region spans residues 83–86 (DAPG). GTP-binding positions include 83 to 87 (DAPGH) and 138 to 141 (NKCD). The G4 stretch occupies residues 138 to 141 (NKCD). Residues 175-177 (SAL) form a G5 region.

This sequence belongs to the TRAFAC class translation factor GTPase superfamily. Classic translation factor GTPase family. EF-Tu/EF-1A subfamily. Monomer.

Its subcellular location is the cytoplasm. The catalysed reaction is GTP + H2O = GDP + phosphate + H(+). Functionally, GTP hydrolase that promotes the GTP-dependent binding of aminoacyl-tRNA to the A-site of ribosomes during protein biosynthesis. This chain is Elongation factor Tu, found in Corynebacterium aurimucosum (strain ATCC 700975 / DSM 44827 / CIP 107346 / CN-1) (Corynebacterium nigricans).